The following is a 185-amino-acid chain: uncharacterized protein (185 aa).

This is an uncharacterized protein from Methanocaldococcus jannaschii (strain ATCC 43067 / DSM 2661 / JAL-1 / JCM 10045 / NBRC 100440) (Methanococcus jannaschii).